We begin with the raw amino-acid sequence, 403 residues long: Signal-transducing adaptor protein 2 (403 aa).

Positions 18-130 constitute a PH domain; it reads PSHYYESFLE…VPTDLTLLPG (113 aa). A Phosphotyrosine; by SRC modification is found at tyrosine 22. The SH2 domain occupies 133 to 248; it reads YMMSEVLAKE…KALVPFLLDE (116 aa). Tyrosine 250 carries the post-translational modification Phosphotyrosine; by PTK6. Residues 270–308 are disordered; the sequence is APSAPGPGPAPCTGGPKPLSPASSQDKLPPLPPLPNQEE. The residue at position 310 (tyrosine 310) is a Phosphotyrosine. Tyrosine 322 is modified (phosphotyrosine; by SRC). The segment at 331–374 is disordered; the sequence is SWPVILKPKKLPKPPAKLPKPPVGPKPEPKVFNGGLGRKLPVSS. Pro residues predominate over residues 343 to 356; the sequence is KPPAKLPKPPVGPK. Positions 382 to 402 form a coiled coil; the sequence is AGLADMTAELQKKLEKRRALE.

Interacts with PTK6 and CSF1R. Post-translationally, phosphorylated on tyrosine. Tyr-250 may be important for interaction with kinases. Phosphorylated by PTK6 at Tyr-250 modulates PTK6-mediated STAT3 activation. Tyr-22 and Tyr-322 appears to be phosphorylated by SRC. As to expression, widely expressed.

Its subcellular location is the cytoplasm. Substrate of protein kinase PTK6. May play a regulatory role in the acute-phase response in systemic inflammation and may modulate STAT3 activity. In Homo sapiens (Human), this protein is Signal-transducing adaptor protein 2 (STAP2).